We begin with the raw amino-acid sequence, 201 residues long: Dermatopontin (201 aa).

An N-terminal signal peptide occupies residues 1–18 (MDLSLLWVLLPLVTMAWG). At Gln19 the chain carries Pyrrolidone carboxylic acid. Tyr23 is subject to Sulfotyrosine. A run of 4 repeats spans residues 26-79 (PYQQ…ACMP), 70-75 (DRQWNY), 80-135 (TPQS…CCRY), and 125-130 (DREWQF). A 2 X 53-55 AA tandem repeats region spans residues 26 to 186 (PYQQYHDYSD…AVERDRQWKF (161 aa)). Cystine bridges form between Cys50-Cys77, Cys90-Cys132, Cys106-Cys133, Cys139-Cys196, and Cys143-Cys189. Residues 70 to 186 (DRQWNYACMP…AVERDRQWKF (117 aa)) form a 3 X 6 AA repeats of D-R-[EQ]-W-[NQK]-[FY] region. Residues Tyr162, Tyr164, Tyr166, and Tyr167 each carry the sulfotyrosine modification. The stretch at 181 to 186 (DRQWKF) is one 3-3 repeat. Position 194 is a sulfotyrosine (Tyr194).

Belongs to the dermatopontin family. As to quaternary structure, interacts with TGFB1, DCN and collagen. Post-translationally, sulfated on tyrosine residue(s). As to expression, expressed in fibroblasts, heart, skeletal muscle, brain and pancreas. Expressed at an intermediate level in lung and kidney, and at a low level in liver and placenta. Expressed at a lower level in fibroblasts from hypertrophic scar lesional skin and in fibroblasts from patients with systemic sclerosis than in normal skin fibroblasts.

The protein localises to the secreted. It is found in the extracellular space. It localises to the extracellular matrix. In terms of biological role, seems to mediate adhesion by cell surface integrin binding. May serve as a communication link between the dermal fibroblast cell surface and its extracellular matrix environment. Enhances TGFB1 activity. Inhibits cell proliferation. Accelerates collagen fibril formation, and stabilizes collagen fibrils against low-temperature dissociation. The chain is Dermatopontin (DPT) from Homo sapiens (Human).